The primary structure comprises 146 residues: Cystatin-C (146 aa).

Positions 1–26 (MAGPLRAPLLLLAILAVALALSPAAG) are cleaved as a signal peptide. A Phosphoserine modification is found at S43. The Secondary area of contact signature appears at 81–85 (QIVAG). 2 disulfides stabilise this stretch: C99–C109 and C123–C143.

Belongs to the cystatin family.

It localises to the secreted. In terms of biological role, as an inhibitor of cysteine proteinases, this protein is thought to serve an important physiological role as a local regulator of this enzyme activity. This Saimiri sciureus (Common squirrel monkey) protein is Cystatin-C (CST3).